A 218-amino-acid polypeptide reads, in one-letter code: MPVTLGYWDIRGLAHAIRLLLEYTDTSYEEKKYTMGDAPNFDRSQWLNEKFKLGLDFPNLPYLIDGSHKITQSNAILRYIARKHDLCGETEEERIQLDILENQAMDTRMQLAMVCYSPDFEKRKPEYLEGLPEKMKLYSEFLGKRSWFAGDKITYVDFLIYDVLDQHRIFAPKCLDAFPNLKDFLARFEGLKKISDYMKSSRFSCKQIFAKMAVWNSK.

Residues 2 to 88 (PVTLGYWDIR…YIARKHDLCG (87 aa)) enclose the GST N-terminal domain. Glutathione contacts are provided by residues 7–8 (YW), 46–50 (WLNEK), 59–60 (NL), and 72–73 (QS). Positions 90–208 (TEEERIQLDI…KSSRFSCKQI (119 aa)) constitute a GST C-terminal domain. Y116 is a substrate binding site.

The protein belongs to the GST superfamily. Mu family. Homodimer.

The protein resides in the cytoplasm. The catalysed reaction is RX + glutathione = an S-substituted glutathione + a halide anion + H(+). Its function is as follows. Conjugation of reduced glutathione to a wide number of exogenous and endogenous hydrophobic electrophiles. This is Glutathione S-transferase from Mesocricetus auratus (Golden hamster).